Reading from the N-terminus, the 62-residue chain is Large ribosomal subunit protein uL30 (62 aa).

Belongs to the universal ribosomal protein uL30 family. In terms of assembly, part of the 50S ribosomal subunit.

In Shouchella clausii (strain KSM-K16) (Alkalihalobacillus clausii), this protein is Large ribosomal subunit protein uL30.